Reading from the N-terminus, the 318-residue chain is Biotin synthase (318 aa).

Positions 36-258 (HDPREVQLCT…VATTRILFPD (223 aa)) constitute a Radical SAM core domain. [4Fe-4S] cluster contacts are provided by Cys-54, Cys-58, and Cys-61. [2Fe-2S] cluster contacts are provided by Cys-98, Cys-130, Cys-190, and Arg-262.

It belongs to the radical SAM superfamily. Biotin synthase family. Homodimer. Requires [4Fe-4S] cluster as cofactor. [2Fe-2S] cluster is required as a cofactor.

It catalyses the reaction (4R,5S)-dethiobiotin + (sulfur carrier)-SH + 2 reduced [2Fe-2S]-[ferredoxin] + 2 S-adenosyl-L-methionine = (sulfur carrier)-H + biotin + 2 5'-deoxyadenosine + 2 L-methionine + 2 oxidized [2Fe-2S]-[ferredoxin]. Its pathway is cofactor biosynthesis; biotin biosynthesis; biotin from 7,8-diaminononanoate: step 2/2. Catalyzes the conversion of dethiobiotin (DTB) to biotin by the insertion of a sulfur atom into dethiobiotin via a radical-based mechanism. This Gloeobacter violaceus (strain ATCC 29082 / PCC 7421) protein is Biotin synthase.